Here is a 433-residue protein sequence, read N- to C-terminus: Trigger factor (433 aa).

The PPIase FKBP-type domain occupies glycine 163–proline 248.

This sequence belongs to the FKBP-type PPIase family. Tig subfamily.

The protein localises to the cytoplasm. It catalyses the reaction [protein]-peptidylproline (omega=180) = [protein]-peptidylproline (omega=0). Its function is as follows. Involved in protein export. Acts as a chaperone by maintaining the newly synthesized protein in an open conformation. Functions as a peptidyl-prolyl cis-trans isomerase. The chain is Trigger factor from Staphylococcus epidermidis (strain ATCC 35984 / DSM 28319 / BCRC 17069 / CCUG 31568 / BM 3577 / RP62A).